We begin with the raw amino-acid sequence, 143 residues long: Small ribosomal subunit protein uS12 (143 aa).

Belongs to the universal ribosomal protein uS12 family. Component of the 40S small ribosomal subunit.

Its subcellular location is the cytoplasm. The protein resides in the cytosol. It is found in the rough endoplasmic reticulum. This chain is Small ribosomal subunit protein uS12 (rps23), found in Gillichthys mirabilis (Long-jawed mudsucker).